Here is a 369-residue protein sequence, read N- to C-terminus: tRNA-specific 2-thiouridylase MnmA (369 aa).

ATP is bound by residues 10 to 17 (GLSGGVDS) and Leu36. Cys97 acts as the Nucleophile in catalysis. An intrachain disulfide couples Cys97 to Cys196. Gly122 provides a ligand contact to ATP. Residues 146–148 (KDQ) are interaction with tRNA. The active-site Cysteine persulfide intermediate is Cys196. An interaction with tRNA region spans residues 301–302 (RY).

This sequence belongs to the MnmA/TRMU family.

The protein localises to the cytoplasm. It catalyses the reaction S-sulfanyl-L-cysteinyl-[protein] + uridine(34) in tRNA + AH2 + ATP = 2-thiouridine(34) in tRNA + L-cysteinyl-[protein] + A + AMP + diphosphate + H(+). Catalyzes the 2-thiolation of uridine at the wobble position (U34) of tRNA, leading to the formation of s(2)U34. This chain is tRNA-specific 2-thiouridylase MnmA, found in Thermosynechococcus vestitus (strain NIES-2133 / IAM M-273 / BP-1).